Here is a 74-residue protein sequence, read N- to C-terminus: Ribosome modulation factor (74 aa).

Belongs to the ribosome modulation factor family.

The protein localises to the cytoplasm. In terms of biological role, during stationary phase, converts 70S ribosomes to an inactive dimeric form (100S ribosomes). This is Ribosome modulation factor from Cellvibrio japonicus (strain Ueda107) (Pseudomonas fluorescens subsp. cellulosa).